The chain runs to 510 residues: MIWHVQNENFILDSTRIFMKAFHLLLFHGSFIFPECILIFGLILLLMIDSTSDQKDIPWLYFISSTSLVMSITALLFRWREEPMISFSGNFQTNNFNEIFQFLILLCSTLCIPLSVEYIECTEMAITEFLLFVLTATLGGMFLCGANDLITIFVAPECFSLCSYLLSGYTKRDVRSNEATTKYLLMGGASSSILVHGFSWLYGSSGGEIELQEIVNGLINTQMYNSPGISIALIFITVGIGFKLSPAPSHQWTPDVYEGSPTPVVAFLSVTSKVAASASATRIFDIPFYFSSNEWHLLLEILAILSMILGNLIAITQTSMKRMLAYSSIGQIGYVIIGIIVGDSNDGYASMITYMLFYISMNLGTFARIVSFGLRTGTDNIRDYAGLYTKDPFLALSSALCLLSLGGLPPLAGFFGKLHLFWCGWQAGLYFLVSIGLLTSVVSIYYYLKIIKLLMTGRNQEITPHVRNYRRSPLRSNNSIELSMIVCVIASTIPGISMNPIIAIAQDTLF.

The next 13 membrane-spanning stretches (helical) occupy residues 24–44 (LLLF…GLIL), 57–77 (IPWL…ALLF), 99–119 (IFQF…VEYI), 124–144 (MAIT…MFLC), 149–169 (LITI…LSGY), 183–203 (YLLM…WLYG), 227–247 (PGIS…LSPA), 295–315 (WHLL…LIAI), 323–343 (MLAY…IVGD), 347–367 (GYAS…GTFA), 395–415 (ALSS…AGFF), 418–438 (LHLF…IGLL), and 484–504 (MIVC…IIAI).

The protein belongs to the complex I subunit 2 family. As to quaternary structure, NDH is composed of at least 16 different subunits, 5 of which are encoded in the nucleus.

The protein resides in the plastid. It localises to the chloroplast thylakoid membrane. The catalysed reaction is a plastoquinone + NADH + (n+1) H(+)(in) = a plastoquinol + NAD(+) + n H(+)(out). The enzyme catalyses a plastoquinone + NADPH + (n+1) H(+)(in) = a plastoquinol + NADP(+) + n H(+)(out). NDH shuttles electrons from NAD(P)H:plastoquinone, via FMN and iron-sulfur (Fe-S) centers, to quinones in the photosynthetic chain and possibly in a chloroplast respiratory chain. The immediate electron acceptor for the enzyme in this species is believed to be plastoquinone. Couples the redox reaction to proton translocation, and thus conserves the redox energy in a proton gradient. The protein is NAD(P)H-quinone oxidoreductase subunit 2 A, chloroplastic of Platanus occidentalis (Sycamore).